The following is an 879-amino-acid chain: MKMLTRLQVLTLALFSKGFLLSLGDHNFLRREIKIEGDLVLGGLFPINEKGTGTEECGRINEDRGIQRLEAMLFAIDEINKDDYLLPGVELGVHILDTCSRDTYALEQSLEFVRASLTKVDEAEYMCPDGSYAIQENIPLLIAGVIGGSYSSVSIQVANLLRLFQIPQISYASTSAKLSDKSRYDYFARTVPPDFYQAKAMAEILRFFNWTYVSTVASEGDYGETGIEAFEQEARLRNICIATAEKVGRSNIRKSYDSVIRELLQKPNARVVVLFMRSDDSRELIAAASRANASFTWVASDGWGAQESIIKGSEHVAYGAITLELASQPVRQFDRYFQSLNPYNNHRNPWFRDFWEQKFQCSLQNKRNHRRVCDKHLAIDSSNYEQESKIMFVVNAVYAMAHALHKMQRTLCPNTTKLCDAMRILDGKKLYRDYLLKINFTAPFNPNKDADSIVKFDTFGDGMGRYNVFNFQNVGGKYSYLKVGHWAETLSLDVDSIHWSRNSVPTSQCSDPCAPNEMKNMQPGDVCCWICIPCEPYEYLADEFTCMDCGPGQWPTADLTGCYDLPEDYIRWEDAWVIGPVTIACLGFMCTCMVVTVFIKHNNTPLVKASGRELCYILLFGVGLSYCMTFFFIAKPSPVICALRRLGLGSSFAICYSALLTKTNCIARIFDGVKNGAQRPKFISPSSQVFICLGLILVQIVMVSVWLILEAPGTRRYTLAEKRETVILKCNVKDSSMLISLTYDVILVILCTVYAFKTRKCPENFNEAKFIGFTMYTTCIIWLAFLPIFYVTSSDYRVQTTTMCISVSLSGFVVLGCLFAPKVHIILFQPQKNVVTHRLHLNRFSVSGTGTTYSQSSASTYVPTVCNGREVLDSTTSSL.

Positions Met1–Ser22 are cleaved as a signal peptide. The Extracellular segment spans residues Leu23–Trp576. Cys57 and Cys99 are disulfide-bonded. L-glutamate is bound by residues Ser151 and Ala172–Thr174. A glycan (N-linked (GlcNAc...) asparagine) is linked at Asn209. Tyr222 contributes to the L-glutamate binding site. Disulfide bonds link Cys240–Cys527, Cys361–Cys373, Cys412–Cys419, Cys509–Cys528, Cys513–Cys531, Cys534–Cys546, and Cys549–Cys562. Asn292 carries N-linked (GlcNAc...) asparagine glycosylation. Asp301 provides a ligand contact to L-glutamate. Residue Lys389 coordinates L-glutamate. N-linked (GlcNAc...) asparagine glycans are attached at residues Asn414 and Asn439. A helical membrane pass occupies residues Val577–Ile599. Residues Lys600–Glu613 are Cytoplasmic-facing. Residues Leu614–Ala634 traverse the membrane as a helical segment. Over Lys635–Arg645 the chain is Extracellular. The helical transmembrane segment at Leu646 to Asn664 threads the bilayer. Over Cys665–Gln688 the chain is Cytoplasmic. The helical transmembrane segment at Val689–Leu709 threads the bilayer. Residues Glu710–Asp734 are Extracellular-facing. The helical transmembrane segment at Ser735–Phe756 threads the bilayer. Residues Lys757–Lys769 lie on the Cytoplasmic side of the membrane. The helical transmembrane segment at Phe770–Thr792 threads the bilayer. Residues Ser793–Thr802 lie on the Extracellular side of the membrane. Residues Met803–Phe828 traverse the membrane as a helical segment. At Gln829–Leu879 the chain is on the cytoplasmic side.

The protein belongs to the G-protein coupled receptor 3 family. In terms of assembly, interacts with TAMALIN.

It localises to the cell membrane. Functionally, G-protein coupled receptor for glutamate. Ligand binding causes a conformation change that triggers signaling via guanine nucleotide-binding proteins (G proteins) and modulates the activity of down-stream effectors. Signaling inhibits adenylate cyclase activity. This chain is Metabotropic glutamate receptor 3 (GRM3), found in Pongo abelii (Sumatran orangutan).